Here is a 106-residue protein sequence, read N- to C-terminus: Large ribosomal subunit protein eL42 (106 aa).

The tract at residues 34–53 (YAQGKRRYDRKQSGYGGQTK) is disordered.

It belongs to the eukaryotic ribosomal protein eL42 family. Component of the large ribosomal subunit.

The protein resides in the cytoplasm. Functionally, component of the large ribosomal subunit. The ribosome is a large ribonucleoprotein complex responsible for the synthesis of proteins in the cell. The chain is Large ribosomal subunit protein eL42 (Rpl36a) from Canis lupus familiaris (Dog).